The primary structure comprises 321 residues: Serine protease 52 (321 aa).

Positions 1–27 (MKRWKDRRTGLLLPLVLLLFGACSSLA) are cleaved as a signal peptide. The 232-residue stretch at 56–287 (IVGGKPANIL…YVRWISKQTA (232 aa)) folds into the Peptidase S1 domain. Cys81 and Cys97 are joined by a disulfide. Active-site charge relay system residues include His96 and Asp142. N-linked (GlcNAc...) asparagine glycosylation occurs at Asn153. 3 disulfide bridges follow: Cys175–Cys242, Cys208–Cys221, and Cys232–Cys263. The active-site Charge relay system is Ser236. The chain crosses the membrane as a helical span at residues 300 to 320 (ACPLVLSCRAILFLYFVMFLL).

Belongs to the peptidase S1 family.

Its subcellular location is the membrane. Functionally, probable serine protease. The sequence is that of Serine protease 52 (Prss52) from Mus musculus (Mouse).